Reading from the N-terminus, the 482-residue chain is uncharacterized protein (482 aa).

In terms of domain architecture, DWNN spans 5–79 (IYYKFKSQKD…STSVIVRRVP (75 aa)). The interval 86 to 108 (GTAARYVSGAPKTTGARSDSVKR) is disordered. The CCHC-type zinc-finger motif lies at 183–200 (YICYRCGQKGHWIQACPT). The RING-type; degenerate zinc finger occupies 282-322 (CTLCKKLARNACRTPCCDKLFCEECIQTALLDSDFECPNCH). Disordered stretches follow at residues 346 to 393 (KSVL…SSAV) and 447 to 482 (QVYH…TKTN). The segment covering 451–466 (NNRNPPRTNSRPSNAS) has biased composition (low complexity).

Its subcellular location is the nucleus. This is an uncharacterized protein from Schizosaccharomyces pombe (strain 972 / ATCC 24843) (Fission yeast).